The sequence spans 157 residues: Endoribonuclease YbeY (157 aa).

Zn(2+) is bound by residues His113, His117, and His123.

It belongs to the endoribonuclease YbeY family. The cofactor is Zn(2+).

It is found in the cytoplasm. Its function is as follows. Single strand-specific metallo-endoribonuclease involved in late-stage 70S ribosome quality control and in maturation of the 3' terminus of the 16S rRNA. The sequence is that of Endoribonuclease YbeY from Ehrlichia ruminantium (strain Gardel).